The following is a 176-amino-acid chain: Lipoprotein signal peptidase (176 aa).

Helical transmembrane passes span 26–46 (LWLA…IVIV), 57–77 (VTGF…SFLA), 82–102 (WQRW…VWLL), and 111–131 (FCFA…DRVI). Residues Asp-137 and Asp-155 contribute to the active site. The chain crosses the membrane as a helical span at residues 147–167 (HWPAFNVADCAITVGAVLLIV).

It belongs to the peptidase A8 family.

The protein localises to the cell inner membrane. The catalysed reaction is Release of signal peptides from bacterial membrane prolipoproteins. Hydrolyzes -Xaa-Yaa-Zaa-|-(S,diacylglyceryl)Cys-, in which Xaa is hydrophobic (preferably Leu), and Yaa (Ala or Ser) and Zaa (Gly or Ala) have small, neutral side chains.. It functions in the pathway protein modification; lipoprotein biosynthesis (signal peptide cleavage). Functionally, this protein specifically catalyzes the removal of signal peptides from prolipoproteins. The sequence is that of Lipoprotein signal peptidase from Cupriavidus taiwanensis (strain DSM 17343 / BCRC 17206 / CCUG 44338 / CIP 107171 / LMG 19424 / R1) (Ralstonia taiwanensis (strain LMG 19424)).